We begin with the raw amino-acid sequence, 131 residues long: Small ribosomal subunit protein uS8 (131 aa).

The protein belongs to the universal ribosomal protein uS8 family. In terms of assembly, part of the 30S ribosomal subunit. Contacts proteins S5 and S12.

Its function is as follows. One of the primary rRNA binding proteins, it binds directly to 16S rRNA central domain where it helps coordinate assembly of the platform of the 30S subunit. This Halorhodospira halophila (strain DSM 244 / SL1) (Ectothiorhodospira halophila (strain DSM 244 / SL1)) protein is Small ribosomal subunit protein uS8.